Reading from the N-terminus, the 501-residue chain is Flagellin (501 aa).

It belongs to the bacterial flagellin family.

It is found in the secreted. The protein resides in the bacterial flagellum. Its function is as follows. Flagellin is the subunit protein which polymerizes to form the filaments of bacterial flagella. The protein is Flagellin (fliC) of Salmonella choleraesuis (strain SC-B67).